We begin with the raw amino-acid sequence, 124 residues long: Late embryogenesis abundant protein 37 (124 aa).

The N-terminal 35 residues, 1 to 35 (MSQSLFNLKSLSRSINNTIRMRRYIVITKASQRAY), are a transit peptide targeting the mitochondrion.

Belongs to the LEA type 3 family.

The protein resides in the mitochondrion. This chain is Late embryogenesis abundant protein 37, found in Arabidopsis thaliana (Mouse-ear cress).